Here is a 448-residue protein sequence, read N- to C-terminus: Trigger factor (448 aa).

In terms of domain architecture, PPIase FKBP-type spans 161–246; that stretch reads GDQVTIDFEG…VHKVAGKQLP (86 aa). The disordered stretch occupies residues 428-448; the sequence is ALQAAQQQEGAEEEAQEETSA. Positions 437–448 are enriched in acidic residues; sequence GAEEEAQEETSA.

It belongs to the FKBP-type PPIase family. Tig subfamily.

The protein localises to the cytoplasm. It carries out the reaction [protein]-peptidylproline (omega=180) = [protein]-peptidylproline (omega=0). Involved in protein export. Acts as a chaperone by maintaining the newly synthesized protein in an open conformation. Functions as a peptidyl-prolyl cis-trans isomerase. This chain is Trigger factor, found in Chromohalobacter salexigens (strain ATCC BAA-138 / DSM 3043 / CIP 106854 / NCIMB 13768 / 1H11).